The following is a 307-amino-acid chain: Fe-S cluster assembly protein dre2 (307 aa).

Disordered stretches follow at residues 1 to 26 and 159 to 179; these read MTPV…PSTS and KKKK…VGFV. Low complexity predominate over residues 15–26; that stretch reads AAPPTKTAPSTS. The interval 23–152 is N-terminal SAM-like domain; it reads PSTSTRTLLL…EKPAYQEAAV (130 aa). The linker stretch occupies residues 153-197; sequence PLRLGGKKKKAPAPTEQPPVATGVGFVDGNDELIDEDDLLSDDDL. Cysteine 207, cysteine 219, cysteine 222, and cysteine 224 together coordinate [2Fe-2S] cluster. The fe-S binding site A stretch occupies residues 207-224; the sequence is CQPEKAKKRRRPCKDCTC. The [4Fe-4S] cluster site is built by cysteine 270, cysteine 273, cysteine 281, and cysteine 284. 2 consecutive short sequence motifs (cx2C motif) follow at residues 270–273 and 281–284; these read CNSC and CSSC. A fe-S binding site B region spans residues 270-284; it reads CNSCSLGDAFRCSSC.

It belongs to the anamorsin family. As to quaternary structure, monomer. Interacts with tah18. Interacts with mia40. [2Fe-2S] cluster serves as cofactor. [4Fe-4S] cluster is required as a cofactor.

It localises to the cytoplasm. Its subcellular location is the mitochondrion intermembrane space. Its function is as follows. Component of the cytosolic iron-sulfur (Fe-S) protein assembly (CIA) machinery required for the maturation of extramitochondrial Fe-S proteins. Part of an electron transfer chain functioning in an early step of cytosolic Fe-S biogenesis, facilitating the de novo assembly of a [4Fe-4S] cluster on the scaffold complex cfd1-nbp35. Electrons are transferred to dre2 from NADPH via the FAD- and FMN-containing protein tah18. Tah18-dre2 are also required for the assembly of the diferric tyrosyl radical cofactor of ribonucleotide reductase (RNR), probably by providing electrons for reduction during radical cofactor maturation in the catalytic small subunit rnr2. This is Fe-S cluster assembly protein dre2 from Aspergillus terreus (strain NIH 2624 / FGSC A1156).